The following is a 429-amino-acid chain: UDP-N-acetylglucosamine 1-carboxyvinyltransferase (429 aa).

Position 22–23 (22–23 (KN)) interacts with phosphoenolpyruvate. Arginine 102 is a binding site for UDP-N-acetyl-alpha-D-glucosamine. Residue cysteine 126 is the Proton donor of the active site. Cysteine 126 is subject to 2-(S-cysteinyl)pyruvic acid O-phosphothioketal. Residues 131 to 135 (RPVDL), 171 to 174 (KVSV), aspartate 316, and isoleucine 338 contribute to the UDP-N-acetyl-alpha-D-glucosamine site.

Belongs to the EPSP synthase family. MurA subfamily.

The protein localises to the cytoplasm. It catalyses the reaction phosphoenolpyruvate + UDP-N-acetyl-alpha-D-glucosamine = UDP-N-acetyl-3-O-(1-carboxyvinyl)-alpha-D-glucosamine + phosphate. Its pathway is cell wall biogenesis; peptidoglycan biosynthesis. In terms of biological role, cell wall formation. Adds enolpyruvyl to UDP-N-acetylglucosamine. In Brucella abortus (strain S19), this protein is UDP-N-acetylglucosamine 1-carboxyvinyltransferase.